Reading from the N-terminus, the 1585-residue chain is Maestro heat-like repeat-containing protein family member 2B (1585 aa).

15 HEAT repeats span residues 28–65 (VNKE…DMRD), 228–263 (GYAL…AAVL), 272–309 (LRRS…LAHS), 310–346 (NPGE…ADEP), 405–445 (TLNR…LVIG), 531–569 (IGLL…STVL), 572–611 (TMLL…NSTE), 662–699 (ENHL…LTKT), 777–819 (SYKE…LKPQ), 964–1001 (HLEV…KFIP), 1021–1059 (PTCT…HMPV), 1112–1151 (ASSG…VISM), 1157–1195 (GLYP…QGEQ), 1258–1295 (GVIL…EPIL), and 1363–1402 (CESL…EQDD).

In terms of assembly, found in a complex at least composed of MROH2B, PRKACA isoform 2 and TCP11. Interacts with PRKACA. Interacts with TCP11. Post-translationally, constitutively phosphorylated on serine and threonine residues in acrosomal region of the sperm head, midpiece and flagellar regions of noncapacitated spermatozoa. Phosphorylation on tyrosine residues increases upon sperm capacitation within the acrosomal and tail regions in a protein kinase A (PKA)-dependent signaling pathway.

It is found in the cytoplasm. The protein resides in the cytoplasmic vesicle. Its subcellular location is the secretory vesicle. The protein localises to the acrosome. It localises to the cell projection. It is found in the cilium. The protein resides in the flagellum. May play a role in the process of sperm capacitation. The sequence is that of Maestro heat-like repeat-containing protein family member 2B from Homo sapiens (Human).